A 344-amino-acid polypeptide reads, in one-letter code: Arginine N-succinyltransferase (344 aa).

Leu-125 contacts succinyl-CoA. The Proton donor role is filled by His-229.

The protein belongs to the arginine N-succinyltransferase family.

The enzyme catalyses succinyl-CoA + L-arginine = N(2)-succinyl-L-arginine + CoA + H(+). It participates in amino-acid degradation; L-arginine degradation via AST pathway; L-glutamate and succinate from L-arginine: step 1/5. Functionally, catalyzes the transfer of succinyl-CoA to arginine to produce N(2)-succinylarginine. This is Arginine N-succinyltransferase from Shigella flexneri.